The following is a 150-amino-acid chain: Probable histone H2A.7 (150 aa).

The span at 1–12 (MESTGKVKKAFG) shows a compositional bias: basic residues. 2 disordered regions span residues 1-27 (MEST…SVSK) and 129-150 (KSAT…PKKA). Serine 146 carries the post-translational modification Phosphoserine. Residues 146 to 149 (SPKK) carry the SPKK motif motif.

Belongs to the histone H2A family. As to quaternary structure, the nucleosome is a histone octamer containing two molecules each of H2A, H2B, H3 and H4 assembled in one H3-H4 heterotetramer and two H2A-H2B heterodimers. The octamer wraps approximately 147 bp of DNA. In terms of processing, not ubiquitinated. As to expression, strong expression through-out the roots and leaves. Also found in meristems and dividing cells.

The protein resides in the nucleus. It localises to the chromosome. Its function is as follows. Core component of nucleosome. Nucleosomes wrap and compact DNA into chromatin, limiting DNA accessibility to the cellular machineries which require DNA as a template. Histones thereby play a central role in transcription regulation, DNA repair, DNA replication and chromosomal stability. DNA accessibility is regulated via a complex set of post-translational modifications of histones, also called histone code, and nucleosome remodeling. The sequence is that of Probable histone H2A.7 from Arabidopsis thaliana (Mouse-ear cress).